Here is a 1377-residue protein sequence, read N- to C-terminus: DNA-directed RNA polymerase subunit beta (1377 aa).

This sequence belongs to the RNA polymerase beta chain family. The RNAP catalytic core consists of 2 alpha, 1 beta, 1 beta' and 1 omega subunit. When a sigma factor is associated with the core the holoenzyme is formed, which can initiate transcription.

The catalysed reaction is RNA(n) + a ribonucleoside 5'-triphosphate = RNA(n+1) + diphosphate. In terms of biological role, DNA-dependent RNA polymerase catalyzes the transcription of DNA into RNA using the four ribonucleoside triphosphates as substrates. In Brucella abortus (strain S19), this protein is DNA-directed RNA polymerase subunit beta.